The sequence spans 119 residues: Autophagy-related protein 8h (119 aa).

Gly-119 carries the Phosphatidylethanolamine amidated glycine lipid modification.

Belongs to the ATG8 family. As to quaternary structure, interacts with ATG4. Interacts with ATI1. In terms of processing, gly-119 forms then a thioester bond with the 'Cys-558' of ATG7 (E1-like activating enzyme) before being transferred to the 'Cys-258' of ATG3 (the specific E2 conjugating enzyme), in order to be finally amidated with phosphatidylethanolamine. This lipid modification anchors ATG8 to autophagosomes. As to expression, constitutively expressed.

It is found in the cytoplasmic vesicle. It localises to the autophagosome membrane. The protein resides in the vacuole membrane. The protein localises to the cytoplasm. Its subcellular location is the cytoskeleton. Functionally, ubiquitin-like modifier involved in autophagosomes formation. May mediate the delivery of the autophagosomes to the vacuole via the microtubule cytoskeleton. The chain is Autophagy-related protein 8h (ATG8H) from Arabidopsis thaliana (Mouse-ear cress).